We begin with the raw amino-acid sequence, 205 residues long: Guanylate kinase (205 aa).

The Guanylate kinase-like domain maps to 18-196 (PKLFTISAPA…AYQVLRSIFI (179 aa)). 25–32 (APAGAGKT) lines the ATP pocket.

It belongs to the guanylate kinase family.

The protein localises to the cytoplasm. It catalyses the reaction GMP + ATP = GDP + ADP. Its function is as follows. Essential for recycling GMP and indirectly, cGMP. This is Guanylate kinase (gmk) from Chlamydia muridarum (strain MoPn / Nigg).